We begin with the raw amino-acid sequence, 193 residues long: Crossover junction endodeoxyribonuclease RuvC (193 aa).

Active-site residues include aspartate 7, glutamate 68, and aspartate 141. Mg(2+) is bound by residues aspartate 7, glutamate 68, and aspartate 141.

This sequence belongs to the RuvC family. In terms of assembly, homodimer which binds Holliday junction (HJ) DNA. The HJ becomes 2-fold symmetrical on binding to RuvC with unstacked arms; it has a different conformation from HJ DNA in complex with RuvA. In the full resolvosome a probable DNA-RuvA(4)-RuvB(12)-RuvC(2) complex forms which resolves the HJ. Mg(2+) serves as cofactor.

It is found in the cytoplasm. It catalyses the reaction Endonucleolytic cleavage at a junction such as a reciprocal single-stranded crossover between two homologous DNA duplexes (Holliday junction).. The RuvA-RuvB-RuvC complex processes Holliday junction (HJ) DNA during genetic recombination and DNA repair. Endonuclease that resolves HJ intermediates. Cleaves cruciform DNA by making single-stranded nicks across the HJ at symmetrical positions within the homologous arms, yielding a 5'-phosphate and a 3'-hydroxyl group; requires a central core of homology in the junction. The consensus cleavage sequence is 5'-(A/T)TT(C/G)-3'. Cleavage occurs on the 3'-side of the TT dinucleotide at the point of strand exchange. HJ branch migration catalyzed by RuvA-RuvB allows RuvC to scan DNA until it finds its consensus sequence, where it cleaves and resolves the cruciform DNA. The sequence is that of Crossover junction endodeoxyribonuclease RuvC from Bifidobacterium adolescentis (strain ATCC 15703 / DSM 20083 / NCTC 11814 / E194a).